A 304-amino-acid polypeptide reads, in one-letter code: Putative S-adenosyl-L-methionine-dependent methyltransferase MMAR_1057 (304 aa).

S-adenosyl-L-methionine contacts are provided by residues aspartate 130 and 159–160 (DL).

It belongs to the UPF0677 family.

In terms of biological role, exhibits S-adenosyl-L-methionine-dependent methyltransferase activity. The sequence is that of Putative S-adenosyl-L-methionine-dependent methyltransferase MMAR_1057 from Mycobacterium marinum (strain ATCC BAA-535 / M).